The chain runs to 228 residues: 7-cyano-7-deazaguanine synthase (228 aa).

Residue 11 to 21 (LSGGLDSATVL) participates in ATP binding. Positions 191, 201, 204, and 207 each coordinate Zn(2+).

It belongs to the QueC family. Requires Zn(2+) as cofactor.

It carries out the reaction 7-carboxy-7-deazaguanine + NH4(+) + ATP = 7-cyano-7-deazaguanine + ADP + phosphate + H2O + H(+). It functions in the pathway purine metabolism; 7-cyano-7-deazaguanine biosynthesis. Catalyzes the ATP-dependent conversion of 7-carboxy-7-deazaguanine (CDG) to 7-cyano-7-deazaguanine (preQ(0)). This Magnetococcus marinus (strain ATCC BAA-1437 / JCM 17883 / MC-1) protein is 7-cyano-7-deazaguanine synthase.